We begin with the raw amino-acid sequence, 205 residues long: MSVFAVVPVKELRGAKSRLGAVLDPVGRAGLTLHMLRRVVPALRGAGLRRVLVVSPDPAVLEEARLLGAAGLRQEGFGLNAALEEGRRRALEEGAGALLALPADLPLIEPADVAALLEVAGEGPCAVISPDDARSGTNALLLRPPGALPFSFGPGSFGVHLQAALRRGVRVRVCERPNVAFDLDSPEDLARLEASGGVQYRPRRA.

Phosphoenolpyruvate is bound by residues Thr-137, Gly-153, and Ser-156.

The protein belongs to the CofC family.

It carries out the reaction phosphoenolpyruvate + GTP + H(+) = enolpyruvoyl-2-diphospho-5'-guanosine + diphosphate. Its pathway is cofactor biosynthesis; coenzyme F420 biosynthesis. In terms of biological role, guanylyltransferase that catalyzes the activation of phosphoenolpyruvate (PEP) as enolpyruvoyl-2-diphospho-5'-guanosine, via the condensation of PEP with GTP. It is involved in the biosynthesis of coenzyme F420, a hydride carrier cofactor. The protein is Phosphoenolpyruvate guanylyltransferase of Rubrobacter xylanophilus (strain DSM 9941 / JCM 11954 / NBRC 16129 / PRD-1).